The chain runs to 229 residues: Probable coenzyme A transferase subunit alpha (229 aa).

Residue 26-32 coordinates CoA; sequence GGFGGVG.

It belongs to the 3-oxoacid CoA-transferase subunit A family. In terms of assembly, heterodimer of a subunit alpha and a subunit beta.

The protein is Probable coenzyme A transferase subunit alpha (yodS) of Bacillus subtilis (strain 168).